The sequence spans 892 residues: Formin-like protein 8 (892 aa).

The first 23 residues, 1–23 (MPPAIARFVAIAAVLLCGHVAVA), serve as a signal peptide directing secretion. The segment at 43–119 (FPIEWTPPPS…SGSGSGHHGG (77 aa)) is disordered. Residues 47-59 (WTPPPSPPPPPAP) are compositionally biased toward pro residues. The span at 87–111 (TTPTSPGTTPSPTTVAADVSKTPSG) shows a compositional bias: low complexity. The helical transmembrane segment at 126-146 (IVAAGAGAAAAVALLGFACAF) threads the bilayer. A disordered region spans residues 188–457 (PTTPARHHGP…GSGEPRPKLK (270 aa)). Residues 210-230 (LRSERARRGVSRDEDADHPSP) are compositionally biased toward basic and acidic residues. Composition is skewed to low complexity over residues 268–286 (AEAW…TTAS), 297–306 (FFPPVAAIAA), and 321–330 (RTRFSTGSTP). Residues 339 to 383 (SPRPVQPSNAPPPPPPPPPPPPPPPPPKLNTAPKPPPPPPPPPSV) show a composition bias toward pro residues. Over residues 424–436 (AATTVDNNGSTSM) the composition is skewed to polar residues. Positions 446–867 (DGGSGEPRPK…GSARSFRISA (422 aa)) constitute an FH2 domain.

Belongs to the formin-like family. Class-I subfamily.

It is found in the membrane. This chain is Formin-like protein 8 (FH8), found in Oryza sativa subsp. japonica (Rice).